The following is a 700-amino-acid chain: Mitosis inducer protein blt1 (700 aa).

Polar residues-rich tracts occupy residues 1–11 (MSKSAFTSKSQ) and 43–53 (PRSTALPNLSN). Disordered regions lie at residues 1-53 (MSKS…NLSN) and 266-293 (TNNR…SKDQ). Residues 273 to 284 (GSDGSNSNFNGG) are compositionally biased toward low complexity. Residues 496–575 (SVALDDHNRQ…LNMLQKLSMQ (80 aa)) adopt a coiled-coil conformation. 2 disordered regions span residues 634–659 (FSSF…RKPS) and 671–700 (SSGS…SSKM). Position 636 is a phosphoserine (Ser636).

In terms of assembly, interacts with cdr2, mid1 and sad1.

It is found in the cytoplasm. The protein resides in the cytoskeleton. Its function is as follows. At the onset of mitosis, forms a medial ring structure before the arrangement of the medial actin ring. Essential for the central positioning of the division septum before the cell divides. This is Mitosis inducer protein blt1 (blt1) from Schizosaccharomyces pombe (strain 972 / ATCC 24843) (Fission yeast).